The sequence spans 409 residues: MDYKSKILSVLLNKYENSKTAHTGERSAQRPQFSFRQKHELSKAYNDEMDYTNRLEINTALKDLIRKKIIEVKWEKWEENRIAEKVYLQYDFIPQAYREAGIEPKIEKMNRILKVLEPLAVHSWEWVRQWYKEVQQSFQNNKTARINLNDVKGYELLVKALSRLEGLEDSIPKRTFSQLVFGDTKLFETTIQNRLLIIYKRYGDIEYESDKEYLESIGILENIQPVYIKGNVDIRVRGEKIALGSFPGGFGLMDETIKELEIQYVHDESIMLIENMTTYYEQIKKNNNILFIYTGGFPKKNVQQLLKKLNIYLENHPVPVYHYGDLDYGGIQIFEYIKRSFFSGLEPYMMDVATYRQFVKYGMEFGEGYEEKLLKMLENEQYSLWHELIKEMLKEKKRVEQEVIVRNVI.

Its function is as follows. Component of antiplasmid transformation system Wadjet type I, composed of JetA, JetB, JetC and JetD. Expression of Wadjet type I in B.subtilis (strain BEST7003) reduces the transformation efficiency of plasmid pHCMC05. This Bacillus cereus (strain Q1) protein is Wadjet protein JetD.